The following is a 330-amino-acid chain: Glycerol-3-phosphate dehydrogenase [NAD(P)+] (330 aa).

The NADPH site is built by Trp11, Arg31, His32, and Lys105. Sn-glycerol 3-phosphate is bound by residues Lys105 and Gly133. Ala137 serves as a coordination point for NADPH. Sn-glycerol 3-phosphate contacts are provided by Lys188, Asp241, Ser251, Arg252, and Asn253. The Proton acceptor role is filled by Lys188. Residue Arg252 coordinates NADPH. Positions 277 and 279 each coordinate NADPH.

Belongs to the NAD-dependent glycerol-3-phosphate dehydrogenase family.

The protein localises to the cytoplasm. The enzyme catalyses sn-glycerol 3-phosphate + NAD(+) = dihydroxyacetone phosphate + NADH + H(+). It carries out the reaction sn-glycerol 3-phosphate + NADP(+) = dihydroxyacetone phosphate + NADPH + H(+). It functions in the pathway membrane lipid metabolism; glycerophospholipid metabolism. In terms of biological role, catalyzes the reduction of the glycolytic intermediate dihydroxyacetone phosphate (DHAP) to sn-glycerol 3-phosphate (G3P), the key precursor for phospholipid synthesis. In Orientia tsutsugamushi (strain Boryong) (Rickettsia tsutsugamushi), this protein is Glycerol-3-phosphate dehydrogenase [NAD(P)+].